The sequence spans 142 residues: Cell division protein SepF (142 aa).

Residues Glu21–Glu31 are compositionally biased toward acidic residues. Residues Glu21 to Asn46 are disordered.

This sequence belongs to the SepF family. As to quaternary structure, homodimer. Interacts with FtsZ.

The protein resides in the cytoplasm. In terms of biological role, cell division protein that is part of the divisome complex and is recruited early to the Z-ring. Probably stimulates Z-ring formation, perhaps through the cross-linking of FtsZ protofilaments. Its function overlaps with FtsA. This chain is Cell division protein SepF, found in Brevibacillus brevis (strain 47 / JCM 6285 / NBRC 100599).